The following is a 720-amino-acid chain: Secreted RxLR effector protein 138 (720 aa).

A signal peptide spans M1–A20. The short motif at R56–R71 is the RxLR-dEER element. The interval E264 to D335 is disordered. The span at K320–D335 shows a compositional bias: basic and acidic residues. The N-linked (GlcNAc...) asparagine glycan is linked to N609.

Belongs to the RxLR effector family.

Its subcellular location is the secreted. It is found in the host nucleus. Functionally, secreted effector that acts as an elicitor that induces cell death in host plant cells. This Plasmopara viticola (Downy mildew of grapevine) protein is Secreted RxLR effector protein 138.